The primary structure comprises 229 residues: DNA repair protein RecO (229 aa).

Belongs to the RecO family.

Its function is as follows. Involved in DNA repair and RecF pathway recombination. In Legionella pneumophila (strain Paris), this protein is DNA repair protein RecO.